Here is a 598-residue protein sequence, read N- to C-terminus: Transcription factor himD (598 aa).

The segment at residues 18–47 is a DNA-binding region (zn(2)-C6 fungal-type); it reads CQNCARAKIRCIRSVPTGSCDRCERLRKTC. Residues 87-110 are disordered; that stretch reads TVSEASIDDKSPTTTPTTPRPPPD.

The protein resides in the nucleus. Its function is as follows. Transcription factor that, with himB, probably co-regulates the him gene cluster that mediates the biosynthesis of himeic acid A, a ubiquitin-activating enzyme (E1) inhibitor. This chain is Transcription factor himD, found in Aspergillus japonicus.